The primary structure comprises 351 residues: Tryptophan--tRNA ligase 2 (351 aa).

Residues 1–24 (MPFVDLEVPTMTTPTPAATPARPR) form a disordered region. Over residues 9-24 (PTMTTPTPAATPARPR) the composition is skewed to low complexity. The 'HIGH' region motif lies at 31–39 (PTGALHLGH). Residues 215–219 (KMSKS) carry the 'KMSKS' region motif. Lys218 contributes to the ATP binding site.

The protein belongs to the class-I aminoacyl-tRNA synthetase family. Homodimer. Forms a complex with nos; one homodimer of trpS2 binds one homodimer of nos.

The catalysed reaction is tRNA(Trp) + L-tryptophan + ATP = L-tryptophyl-tRNA(Trp) + AMP + diphosphate + H(+). Catalyzes the formation of 5'adenyl-Trp and tRNA(Trp) but with 5-fold less activity than TrpRS. Increases the solubility of the nitric oxide synthase oxygenase (nos), as well as its affinity for substrate L-arginine and its nitric-oxide synthase activity. The complex between trpS2 and nos catalyzes the regioselective nitration of tryptophan at the 4-position. The chain is Tryptophan--tRNA ligase 2 (trpS2) from Deinococcus radiodurans (strain ATCC 13939 / DSM 20539 / JCM 16871 / CCUG 27074 / LMG 4051 / NBRC 15346 / NCIMB 9279 / VKM B-1422 / R1).